The sequence spans 397 residues: ATP-dependent RNA helicase RhlB (397 aa).

The Q motif signature appears at 8–36 (TRFHDFNLAPELMHAIQDLGFPYCTPIQA). The Helicase ATP-binding domain occupies 39-219 (LGFTLKGKDA…KQWTTDPSIV (181 aa)). 52 to 59 (AQTGTGKT) contributes to the ATP binding site. The DEAD box motif lies at 165-168 (DEAD). A Helicase C-terminal domain is found at 242 to 392 (DKYKLLYNLV…TPPTHLLRAV (151 aa)).

Belongs to the DEAD box helicase family. RhlB subfamily. In terms of assembly, component of the RNA degradosome, which is a multiprotein complex involved in RNA processing and mRNA degradation.

It localises to the cytoplasm. It catalyses the reaction ATP + H2O = ADP + phosphate + H(+). Its function is as follows. DEAD-box RNA helicase involved in RNA degradation. Has RNA-dependent ATPase activity and unwinds double-stranded RNA. The sequence is that of ATP-dependent RNA helicase RhlB from Pseudomonas syringae pv. tomato (strain ATCC BAA-871 / DC3000).